The sequence spans 256 residues: Probable cyclic nucleotide phosphodiesterase Fisuc_1441/FSU_1912 (256 aa).

The Fe cation site is built by aspartate 20, histidine 22, aspartate 59, asparagine 89, histidine 156, histidine 196, and histidine 198. Residues histidine 22, aspartate 59, and 89–90 (NH) contribute to the AMP site. An AMP-binding site is contributed by histidine 198.

It belongs to the cyclic nucleotide phosphodiesterase class-III family. Requires Fe(2+) as cofactor.

The protein is Probable cyclic nucleotide phosphodiesterase Fisuc_1441/FSU_1912 of Fibrobacter succinogenes (strain ATCC 19169 / S85).